The chain runs to 429 residues: Lysine-specific demethylase JMJ30 (429 aa).

One can recognise a JmjC domain in the interval 272-429 (SSPMEPTYLA…WSNEAESSSS (158 aa)). His326, Asp328, and His405 together coordinate Fe cation.

Belongs to the JARID1 histone demethylase family. In terms of assembly, interacts with EFM. Binds to ATXR2, ARF7 and ARF19. It depends on Fe(2+) as a cofactor. Expressed ubiquitously in vasculatures, roots, rosette leaves, stems, inflorescences and siliques. Mainly present in the root meristem and root differentiation area. Observed at high level in callus.

Its subcellular location is the nucleus. The protein resides in the cytoplasm. It localises to the endoplasmic reticulum. The enzyme catalyses N(6),N(6),N(6)-trimethyl-L-lysyl(36)-[histone H3] + 2 2-oxoglutarate + 2 O2 = N(6)-methyl-L-lysyl(36)-[histone H3] + 2 formaldehyde + 2 succinate + 2 CO2. It catalyses the reaction N(6),N(6),N(6)-trimethyl-L-lysyl(27)-[histone H3] + 2 2-oxoglutarate + 2 O2 = N(6)-methyl-L-lysyl(27)-[histone H3] + 2 formaldehyde + 2 succinate + 2 CO2. The catalysed reaction is N(6),N(6)-dimethyl-L-lysyl(36)-[histone H3] + 2 2-oxoglutarate + 2 O2 = L-lysyl(36)-[histone H3] + 2 formaldehyde + 2 succinate + 2 CO2. Histone demethylase that demethylates 'Lys-36' (H3K36me) of histone H3 with a specific activity for H3K36me3 and H3K36me2. Also active on 'Lys-27' (H3K27me) of histone H3 with a specific activity for H3K27me3 and H3K27me2. No activity on H3K36me1 and H3K27me1. Involved in the control of flowering time by demethylating H3K36me2 at the FT locus and repressing its expression. Acts within the central clock and contributes, in parallel with LUX, to temperature compensation, probably as a component of the evening complex, to maintain circadian period at increasing temperatures; this mechanism involves binding to and regulation of CCA1 and PRR7 promoters. Works in concert with TOC1 to promote the morning-phased clock genes CCA1 and LHY which function as components of the central oscillator. Together with JMJ32, regulates the flowering-repressor FLOWERING LOCUS C (FLC) locus by removing the repressive histone modification H3 lysine 27 trimethylation (H3K27me3), especially at elevated temperatures (e.g. 29 degrees Celsius), thus preventing extreme precocious flowering. JMJ30 and JMJ32 are regulators involved in the integration of abscisic acid (ABA) and brassinosteroids (BR) signaling pathways. Together with JMJ32, controls ABA-mediated growth arrest during the post-germination stage in unfavorable conditions, and responses to ABA during root development, via the removal of repressive histone mark (H3K27me3) from the SnRK2.8 promoter, thus promoting SnRK2.8 expression and subsequent kinase-dependent ABI3 activation. In addition, removes the repressive histone marks (H3K27me3) from the BZR1 locus in response to stress and ABA, thus activating the BR signaling pathway which, in turn, inhibits the ABA signaling pathway. Able to drive tissue identity changes to promote callus formation form somatic cells via a massive genome-wide chromatin remodeling (e.g. H3K9me3 demethylation) leading to the induction of Lateral organ Boundaries-Domain (LBD) genes (e.g. LBD16 and LBD29) that establish root primordia; when in complex with ARF proteins (e.g. ARF7 and ARF19), recruits ATXR2 which promotes the deposition of H3K36me3 at LBD genes promoters, thus ensuring their stable activation during callus formation. The protein is Lysine-specific demethylase JMJ30 of Arabidopsis thaliana (Mouse-ear cress).